Reading from the N-terminus, the 1013-residue chain is Poly [ADP-ribose] polymerase 1 (1013 aa).

Ala-2 is subject to N-acetylalanine. The PARP-type 1 zinc finger occupies 9–93; sequence YRVQYAKSGR…KVKKTAEAGG (85 aa). Zn(2+)-binding residues include Cys-21 and Cys-24. A Phosphoserine modification is found at Ser-41. Zn(2+)-binding residues include His-53 and Cys-56. N6-acetyllysine occurs at positions 97 and 105. The segment at 113–203 adopts a PARP-type 2 zinc-finger fold; sequence FAAEYAKSNR…ALKKQLPAIK (91 aa). Positions 125 and 128 each coordinate Zn(2+). An N6-acetyllysine modification is found at Lys-131. Positions 159 and 162 each coordinate Zn(2+). A phosphoserine mark is found at Ser-177, Ser-179, and Ser-185. Residue Lys-192 forms a Glycyl lysine isopeptide (Lys-Gly) (interchain with G-Cter in SUMO2) linkage. Positions 200–226 are disordered; that stretch reads PAIKNEGKRKGDEVDGTDEVAKKKSRK. Lys-203 participates in a covalent cross-link: Glycyl lysine isopeptide (Lys-Gly) (interchain with G-Cter in SUMO1); alternate. A Glycyl lysine isopeptide (Lys-Gly) (interchain with G-Cter in SUMO2); alternate cross-link involves residue Lys-203. Residues 204-226 are compositionally biased toward basic and acidic residues; sequence NEGKRKGDEVDGTDEVAKKKSRK. Short sequence motifs (nuclear localization signal) lie at residues 207–209 and 221–226; these read KRK and KKKSRK. Residues 225–359 form the PADR1 zinc-binding domain; it reads RKETDKYSKL…VKKQDRIFPP (135 aa). Lys-249 participates in a covalent cross-link: Glycyl lysine isopeptide (Lys-Gly) (interchain with G-Cter in SUMO2). Ser-274 and Ser-277 each carry phosphoserine. Residues 290-332 form a zinc ribbon region; the sequence is GALLPCKECSGQLVFKSDAYYCTGDVTAWTKCMVKTQNPSRKE. 4 residues coordinate Zn(2+): Cys-295, Cys-298, Cys-311, and Cys-321. The automodification domain stretch occupies residues 373 to 523; the sequence is VTSAPTAVNS…GVNKSEKRMK (151 aa). Residues 385–476 enclose the BRCT domain; sequence PADKPLSNMK…KSLQDLLSAH (92 aa). A PolyADP-ribosyl aspartic acid modification is found at Asp-387. A polyADP-ribosyl glutamic acid mark is found at Glu-407, Glu-413, Glu-435, Glu-437, Glu-444, Glu-445, Glu-448, and Glu-456. Residue Lys-467 forms a Glycyl lysine isopeptide (Lys-Gly) (interchain with G-Cter in SUMO2) linkage. Glu-484 is modified (polyADP-ribosyl glutamic acid). A Glycyl lysine isopeptide (Lys-Gly) (interchain with G-Cter in SUMO1); alternate cross-link involves residue Lys-486. Lys-486 participates in a covalent cross-link: Glycyl lysine isopeptide (Lys-Gly) (interchain with G-Cter in SUMO2); alternate. 2 positions are modified to polyADP-ribosyl glutamic acid: Glu-488 and Glu-491. A disordered region spans residues 489–508; that stretch reads PGEVVAPRGKSAAPSKKSKG. Residues 494–503 are compositionally biased toward low complexity; it reads APRGKSAAPS. 3 positions are modified to ADP-ribosylserine: Ser-499, Ser-503, and Ser-506. Lys-511 is covalently cross-linked (Glycyl lysine isopeptide (Lys-Gly) (interchain with G-Cter in SUMO2)). A polyADP-ribosyl glutamic acid mark is found at Glu-512 and Glu-513. Ser-518 is subject to ADP-ribosylserine. PolyADP-ribosyl glutamic acid is present on Glu-519. N6-(ADP-ribosyl)lysine is present on Lys-520. Lys-527 is covalently cross-linked (Glycyl lysine isopeptide (Lys-Gly) (interchain with G-Cter in SUMO2)). Residues 541–637 form the WGR domain; that stretch reads SAHVLEKGGK…KNFTKYPKKF (97 aa). Thr-593 bears the Phosphothreonine mark. 2 positions are modified to N6-acetyllysine: Lys-599 and Lys-620. In terms of domain architecture, PARP alpha-helical spans 661 to 778; it reads KSKLPKPVQE…DIEVAYSLLR (118 aa). Lys-747 is covalently cross-linked (Glycyl lysine isopeptide (Lys-Gly) (interchain with G-Cter in SUMO1); alternate). A Glycyl lysine isopeptide (Lys-Gly) (interchain with G-Cter in SUMO2); alternate cross-link involves residue Lys-747. Residues Ser-781 and Ser-785 each carry the phosphoserine modification. The PARP catalytic domain maps to 787-1013; that stretch reads DPIDVNYEKL…LKFNFKTSLW (227 aa). Residues 861–863, Gly-870, Arg-877, and Ser-903 contribute to the NAD(+) site; that span reads HGS. Glu-987 (for poly [ADP-ribose] polymerase activity) is an active-site residue.

This sequence belongs to the ARTD/PARP family. In terms of assembly, homodimer; PARP-type zinc-fingers from separate PARP1 molecules form a dimer module that specifically recognizes DNA strand breaks. Heterodimer; heterodimerizes with PARP2. Interacts (via the PARP catalytic domain) with HPF1. Interacts with NMNAT1. Interacts with nucleosomes; with a preference for nucleosomes containing H2A.X. Interacts with APTX. Component of a base excision repair (BER) complex, containing at least XRCC1, PARP1, PARP2, POLB and LRIG3. Interacts with SRY. The SWAP complex consists of NPM1, NCL, PARP1 and SWAP70. Interacts with TIAM2. Interacts with PARP3; leading to activate PARP1 in absence of DNA. Interacts (when poly-ADP-ribosylated) with CHD1L (via macro domain). Interacts with the DNA polymerase alpha catalytic subunit POLA1; this interaction functions as part of the control of replication fork progression. Interacts with EEF1A1 and TXK. Interacts with RNF4. Interacts with RNF146. Interacts with ZNF423. Interacts with APLF. Interacts with SNAI1 (via zinc fingers); the interaction requires SNAI1 to be poly-ADP-ribosylated and non-phosphorylated (active) by GSK3B. Interacts (when poly-ADP-ribosylated) with PARP9. Interacts with NR4A3; activates PARP1 by improving acetylation of PARP1 and suppressing the interaction between PARP1 and SIRT1. Interacts (via catalytic domain) with PUM3; the interaction inhibits the poly-ADP-ribosylation activity of PARP1 and the degradation of PARP1 by CASP3 following genotoxic stress. Interacts with ZNF365. Interacts with RRP1B. Interacts with TIMELESS; the interaction is direct. Interacts with CGAS; leading to impede the formation of the PARP1-TIMELESS complex. Interacts with KHDC3L, the interaction is increased following the formation of DNA double-strand breaks. Interacts (when auto-poly-ADP-ribosylated) with XRCC1; leading to inhibit PARP1 ADP-ribosyltransferase activity. Interacts with SPINDOC; promoting PARP1 ADP-ribosyltransferase activity. Interacts with BANF1; leading to inhibit PARP1 ADP-ribosyltransferase activity in response to oxidative DNA damage. Interacts (when sumoylated and ubiquitinated) with VCP/p97; leading to its extraction from chromatin. Interacts with YARS1; promoting PARP1 ADP-ribosyltransferase activity. Interacts with PACMP micropeptide; Interacts with PACMP micropeptide; interaction. Interacts (when poly-ADP-ribosylated) with isoform 1 of MACROH2A1; MACROH2A1 specifically binds to poly-ADP-ribose chains and inhibits PARP1 activity, limiting the consumption of nuclear NAD(+). Interacts with CARM1; promoting recruitment to replication forks. Interacts with RECQL. Interacts with ZNF32; the interaction reshapes ZNF432 interacting proteins. Interacts with TPRN; TPRN interacts with a number of DNA damage response proteins, is recruited to sites of DNA damage and may play a role in DNA damage repair. Interacts (when auto-poly-ADP-ribosylated) with AIFM1. Post-translationally, poly-ADP-ribosylated on serine, glutamate and aspartate residues by autocatalysis. Auto-ADP-ribosylation on serine takes place following interaction with HPF1. Auto poly-ADP-ribosylation on serine residues promotes its dissociation from chromatin. Poly-ADP-ribosylated by PARP2; poly-ADP-ribosylation mediates the recruitment of CHD1L to DNA damage sites. Mono-ADP-ribosylated at Lys-520 by SIRT6 in response to oxidative stress, promoting recruitment to double-strand breaks (DSBs) sites. In terms of processing, S-nitrosylated, leading to inhibit transcription regulation activity. Phosphorylated at Thr-593 by PRKDC in response to DNA damage following virus infection, promoting its translocation to the cytosol. Phosphorylated by TXK. Post-translationally, proteolytically cleaved by caspase-3 (CASP3) and caspase-7 (CASP7) in response to apoptosis to generate the Poly [ADP-ribose] polymerase 1, processed N-terminus and Poly [ADP-ribose] polymerase 1, processed C-terminus forms. In terms of processing, sumoylated with SUMO1 or SUMO2 by PIAS4 following prolonged residence (trapping) to chromatin. Sumoylation promotes ubiquitination by RNF4 and removal from chromatin by VCP/p97. Ubiquitinated by RNF4 following sumoylation by PIAS4 in response to prolonged residence (trapping) to chromatin. Ubiquitination promotes removal from chromatin by VCP/p97. In terms of tissue distribution, widely expressed. Expression is correlated with proliferation, with higher levels occurring during early fetal development and organogenesis and in the highly proliferative cell compartments of adult. Expressed in B-cells that have been induced to switch to various Ig isotypes.

It localises to the chromosome. It is found in the nucleus. Its subcellular location is the nucleolus. The protein localises to the cytoplasm. The protein resides in the cytosol. It carries out the reaction NAD(+) + (ADP-D-ribosyl)n-acceptor = nicotinamide + (ADP-D-ribosyl)n+1-acceptor + H(+).. It catalyses the reaction L-seryl-[protein] + NAD(+) = O-(ADP-D-ribosyl)-L-seryl-[protein] + nicotinamide + H(+). The catalysed reaction is L-aspartyl-[protein] + NAD(+) = 4-O-(ADP-D-ribosyl)-L-aspartyl-[protein] + nicotinamide. The enzyme catalyses L-glutamyl-[protein] + NAD(+) = 5-O-(ADP-D-ribosyl)-L-glutamyl-[protein] + nicotinamide. It carries out the reaction L-tyrosyl-[protein] + NAD(+) = O-(ADP-D-ribosyl)-L-tyrosyl-[protein] + nicotinamide + H(+). It catalyses the reaction L-histidyl-[protein] + NAD(+) = N(tele)-(ADP-D-ribosyl)-L-histidyl-[protein] + nicotinamide + H(+). Its activity is regulated as follows. ADP-ribosyltransferase activity is regulated via an allosteric activation mechanism. In absence of activation signal, PARP1 is autoinhibited by the PARP alpha-helical domain (also named HD region), which prevents effective NAD(+)-binding. Activity is highly stimulated by signals, such as DNA strand breaks. Binding to damaged DNA unfolds the PARP alpha-helical domain, relieving autoinhibition. Poly-ADP-ribosyltransferase activity is tightly regulated and PARP1 is removed from damaged chromatin following initial poly-ADP-ribosylation of chromatin to avoid prolonged residence (trapping) that has cytotoxic consequences. A number of factors (VCP/p97) or post-translational modifications (auto-poly-ADP-ribosylation or ubiquitination) promote PARP1 removal from chromatin. Functionally, poly-ADP-ribosyltransferase that mediates poly-ADP-ribosylation of proteins and plays a key role in DNA repair. Mediates glutamate, aspartate, serine, histidine or tyrosine ADP-ribosylation of proteins: the ADP-D-ribosyl group of NAD(+) is transferred to the acceptor carboxyl group of target residues and further ADP-ribosyl groups are transferred to the 2'-position of the terminal adenosine moiety, building up a polymer with an average chain length of 20-30 units. Serine ADP-ribosylation of proteins constitutes the primary form of ADP-ribosylation of proteins in response to DNA damage. Specificity for the different amino acids is conferred by interacting factors, such as HPF1 and NMNAT1. Following interaction with HPF1, catalyzes serine ADP-ribosylation of target proteins; HPF1 confers serine specificity by completing the PARP1 active site. Also catalyzes tyrosine ADP-ribosylation of target proteins following interaction with HPF1. Following interaction with NMNAT1, catalyzes glutamate and aspartate ADP-ribosylation of target proteins; NMNAT1 confers glutamate and aspartate specificity. PARP1 initiates the repair of DNA breaks: recognizes and binds DNA breaks within chromatin and recruits HPF1, licensing serine ADP-ribosylation of target proteins, such as histones (H2BS6ADPr and H3S10ADPr), thereby promoting decompaction of chromatin and the recruitment of repair factors leading to the reparation of DNA strand breaks. HPF1 initiates serine ADP-ribosylation but restricts the polymerase activity of PARP1 in order to limit the length of poly-ADP-ribose chains. In addition to base excision repair (BER) pathway, also involved in double-strand breaks (DSBs) repair: together with TIMELESS, accumulates at DNA damage sites and promotes homologous recombination repair by mediating poly-ADP-ribosylation. Mediates the poly-ADP-ribosylation of a number of proteins, including itself, APLF, CHFR and NFAT5. In addition to proteins, also able to ADP-ribosylate DNA: catalyzes ADP-ribosylation of DNA strand break termini containing terminal phosphates and a 2'-OH group in single- and double-stranded DNA, respectively. Required for PARP9 and DTX3L recruitment to DNA damage sites. PARP1-dependent PARP9-DTX3L-mediated ubiquitination promotes the rapid and specific recruitment of 53BP1/TP53BP1, UIMC1/RAP80, and BRCA1 to DNA damage sites. PARP1-mediated DNA repair in neurons plays a role in sleep: senses DNA damage in neurons and promotes sleep, facilitating efficient DNA repair. In addition to DNA repair, also involved in other processes, such as transcription regulation, programmed cell death, membrane repair, adipogenesis and innate immunity. Acts as a repressor of transcription: binds to nucleosomes and modulates chromatin structure in a manner similar to histone H1, thereby altering RNA polymerase II. Acts both as a positive and negative regulator of transcription elongation, depending on the context. Acts as a positive regulator of transcription elongation by mediating poly-ADP-ribosylation of NELFE, preventing RNA-binding activity of NELFE and relieving transcription pausing. Acts as a negative regulator of transcription elongation in response to DNA damage by catalyzing poly-ADP-ribosylation of CCNT1, disrupting the phase separation activity of CCNT1 and subsequent activation of CDK9. Involved in replication fork progression following interaction with CARM1: mediates poly-ADP-ribosylation at replication forks, slowing fork progression. Poly-ADP-ribose chains generated by PARP1 also play a role in poly-ADP-ribose-dependent cell death, a process named parthanatos. Also acts as a negative regulator of the cGAS-STING pathway. Acts by mediating poly-ADP-ribosylation of CGAS: PARP1 translocates into the cytosol following phosphorylation by PRKDC and catalyzes poly-ADP-ribosylation and inactivation of CGAS. Acts as a negative regulator of adipogenesis: catalyzes poly-ADP-ribosylation of histone H2B on 'Glu-35' (H2BE35ADPr) following interaction with NMNAT1, inhibiting phosphorylation of H2B at 'Ser-36' (H2BS36ph), thereby blocking expression of pro-adipogenetic genes. Involved in the synthesis of ATP in the nucleus, together with NMNAT1, PARG and NUDT5. Nuclear ATP generation is required for extensive chromatin remodeling events that are energy-consuming. Promotes AIFM1-mediated apoptosis. This form, which translocates into the cytoplasm following cleavage by caspase-3 (CASP3) and caspase-7 (CASP7) in response to apoptosis, is auto-poly-ADP-ribosylated and serves as a poly-ADP-ribose carrier to induce AIFM1-mediated apoptosis. Its function is as follows. This cleavage form irreversibly binds to DNA breaks and interferes with DNA repair, promoting DNA damage-induced apoptosis. This chain is Poly [ADP-ribose] polymerase 1 (Parp1), found in Mus musculus (Mouse).